Here is a 153-residue protein sequence, read N- to C-terminus: Large ribosomal subunit protein bL9 (153 aa).

This sequence belongs to the bacterial ribosomal protein bL9 family.

In terms of biological role, binds to the 23S rRNA. This is Large ribosomal subunit protein bL9 from Mycoplasma mycoides subsp. mycoides SC (strain CCUG 32753 / NCTC 10114 / PG1).